The sequence spans 486 residues: Arginine/agmatine antiporter (486 aa).

12 helical membrane passes run 12–32 (LGAI…GIFS), 41–61 (AGAG…FFIA), 85–105 (GFGP…QIFG), 129–149 (NTIP…FIVL), 160–180 (IIGT…TAFA), 211–231 (STML…VMSA), 242–262 (ATLL…ILPF), 296–316 (VGLL…VAEI), 341–361 (LSLY…YFST), 367–387 (MLSI…AFLF), 418–438 (LWLI…LLAL), and 461–481 (EVTK…LFST).

Belongs to the amino acid-polyamine-organocation (APC) superfamily. Basic amino acid/polyamine antiporter (APA) (TC 2.A.3.2) family.

It localises to the cell inner membrane. Catalyzes the exchange of L-arginine for agmatine. The arginine uptake by the bacterium in the macrophage may be a virulence factor against the host innate immune response. The protein is Arginine/agmatine antiporter (aaxC) of Chlamydia caviae (strain ATCC VR-813 / DSM 19441 / 03DC25 / GPIC) (Chlamydophila caviae).